The chain runs to 46 residues: Large ribosomal subunit protein bL34c (46 aa).

This sequence belongs to the bacterial ribosomal protein bL34 family.

Its subcellular location is the plastid. The protein localises to the chloroplast. The polypeptide is Large ribosomal subunit protein bL34c (Pyropia yezoensis (Susabi-nori)).